The sequence spans 104 residues: Large ribosomal subunit protein eL36 (104 aa).

Belongs to the eukaryotic ribosomal protein eL36 family.

In Tetrahymena thermophila (strain SB210), this protein is Large ribosomal subunit protein eL36 (RPL36).